A 155-amino-acid polypeptide reads, in one-letter code: Ribosomal RNA large subunit methyltransferase H (155 aa).

Residues Leu73, Gly104, and 123 to 128 (LSPLTL) each bind S-adenosyl-L-methionine.

This sequence belongs to the RNA methyltransferase RlmH family. As to quaternary structure, homodimer.

The protein resides in the cytoplasm. It catalyses the reaction pseudouridine(1915) in 23S rRNA + S-adenosyl-L-methionine = N(3)-methylpseudouridine(1915) in 23S rRNA + S-adenosyl-L-homocysteine + H(+). Specifically methylates the pseudouridine at position 1915 (m3Psi1915) in 23S rRNA. The chain is Ribosomal RNA large subunit methyltransferase H from Pseudomonas putida (strain W619).